A 32-amino-acid polypeptide reads, in one-letter code: Giant hemoglobin AIV chain (32 aa).

Belongs to the globin family. In terms of assembly, giant hemoglobin is composed of four heme-containing chains (AI to AIV), and two linker chains (AV and AVI).

In Lamellibrachia sp. (Deep-sea giant tube worm), this protein is Giant hemoglobin AIV chain.